The chain runs to 160 residues: SUMO-conjugating enzyme SCE1 (160 aa).

N-acetylalanine is present on alanine 2. Residues isoleucine 5 to alanine 158 form the UBC core domain. Cysteine 94 functions as the Glycyl thioester intermediate in the catalytic mechanism.

The protein belongs to the ubiquitin-conjugating enzyme family. In terms of assembly, interacts with SIZ1 (via PHD domain) and MMS21. Interacts with TCP14 and TCP15. Interacts with KIN10.

It participates in protein modification; protein sumoylation. SUMO-conjugating enzyme that accepts the SUMO proteins from the E1 SUMO-activating heterodimer SAE1/SAE2 and catalyzes its covalent attachment to other proteins with the E3 SUMO ligases SIZ1 and MMS21. Associates with SIZ1 for sumoylation of the transcription factor GTE3. This Arabidopsis thaliana (Mouse-ear cress) protein is SUMO-conjugating enzyme SCE1 (SCE1).